The sequence spans 217 residues: Peroxiredoxin (217 aa).

A Thioredoxin domain is found at Pro2–Val159. Cys46 (cysteine sulfenic acid (-SOH) intermediate) is an active-site residue. Arg122 contacts substrate. Cysteines 206 and 212 form a disulfide.

Belongs to the peroxiredoxin family. Prx6 subfamily. In terms of assembly, homodecamer. Pentamer of dimers that assemble into a ring structure.

It localises to the cytoplasm. The enzyme catalyses a hydroperoxide + [thioredoxin]-dithiol = an alcohol + [thioredoxin]-disulfide + H2O. In terms of biological role, thiol-specific peroxidase that catalyzes the reduction of hydrogen peroxide and organic hydroperoxides to water and alcohols, respectively. Plays a role in cell protection against oxidative stress by detoxifying peroxides. This Methanocaldococcus jannaschii (strain ATCC 43067 / DSM 2661 / JAL-1 / JCM 10045 / NBRC 100440) (Methanococcus jannaschii) protein is Peroxiredoxin.